Consider the following 612-residue polypeptide: uncharacterized protein (612 aa).

A J domain is found at 8–75 (ELYLALGLPK…SKKEIYDNFG (68 aa)). Residues 445-465 (AVFWGLVFPITSILGVEQFFL) form a helical membrane-spanning segment.

This sequence belongs to the DnaJ family.

It localises to the membrane. This is an uncharacterized protein from Schizosaccharomyces pombe (strain 972 / ATCC 24843) (Fission yeast).